Reading from the N-terminus, the 408-residue chain is NADH-quinone oxidoreductase subunit D (408 aa).

Belongs to the complex I 49 kDa subunit family. NDH-1 is composed of 14 different subunits. Subunits NuoB, C, D, E, F, and G constitute the peripheral sector of the complex.

It is found in the cell inner membrane. It catalyses the reaction a quinone + NADH + 5 H(+)(in) = a quinol + NAD(+) + 4 H(+)(out). Functionally, NDH-1 shuttles electrons from NADH, via FMN and iron-sulfur (Fe-S) centers, to quinones in the respiratory chain. The immediate electron acceptor for the enzyme in this species is believed to be ubiquinone. Couples the redox reaction to proton translocation (for every two electrons transferred, four hydrogen ions are translocated across the cytoplasmic membrane), and thus conserves the redox energy in a proton gradient. This chain is NADH-quinone oxidoreductase subunit D, found in Campylobacter hominis (strain ATCC BAA-381 / DSM 21671 / CCUG 45161 / LMG 19568 / NCTC 13146 / CH001A).